The sequence spans 390 residues: Manganese peroxidase 2 (390 aa).

The first 23 residues, 1-23 (MAFNFAAILAFVSLAAVTSAAPS), serve as a signal peptide directing secretion. 5 cysteine pairs are disulfide-bonded: cysteine 27/cysteine 39, cysteine 38/cysteine 313, cysteine 57/cysteine 141, cysteine 277/cysteine 343, and cysteine 365/cysteine 372. Mn(2+) contacts are provided by glutamate 59 and glutamate 63. Residue histidine 70 is the Proton acceptor of the active site. Ca(2+)-binding residues include aspartate 71, glycine 86, aspartate 88, and serine 90. N-linked (GlcNAc...) asparagine glycosylation is present at asparagine 155. Residue histidine 197 coordinates heme b. Serine 198 is a binding site for Ca(2+). A Mn(2+)-binding site is contributed by aspartate 203. Ca(2+)-binding residues include aspartate 215, threonine 217, and aspartate 222. N-linked (GlcNAc...) asparagine glycosylation occurs at asparagine 241.

Belongs to the peroxidase family. Ligninase subfamily. Heme b is required as a cofactor. Requires Ca(2+) as cofactor.

Its subcellular location is the secreted. It catalyses the reaction 2 Mn(2+) + H2O2 + 2 H(+) = 2 Mn(3+) + 2 H2O. In terms of biological role, catalyzes the oxidation of Mn(2+) to Mn(3+). The latter, acting as a diffusible redox mediator, is capable of oxidizing a variety of lignin compounds. The sequence is that of Manganese peroxidase 2 (mnp2) from Phlebia radiata (White-rot fungus).